Consider the following 155-residue polypeptide: Small ribosomal subunit protein uS7cz/uS7cy (155 aa).

This sequence belongs to the universal ribosomal protein uS7 family. As to quaternary structure, part of the 30S ribosomal subunit.

The protein resides in the plastid. It is found in the chloroplast. Functionally, one of the primary rRNA binding proteins, it binds directly to 16S rRNA where it nucleates assembly of the head domain of the 30S subunit. This is Small ribosomal subunit protein uS7cz/uS7cy (rps7-A) from Lactuca sativa (Garden lettuce).